The sequence spans 106 residues: UPF0060 membrane protein Csal_2746 (106 aa).

Helical transmembrane passes span 6–26, 31–51, 59–79, and 85–105; these read LLFI…WLWL, SPWL…LLSL, VYAA…WGVD, and PTDW…ASGW.

The protein belongs to the UPF0060 family.

The protein localises to the cell inner membrane. This is UPF0060 membrane protein Csal_2746 from Chromohalobacter salexigens (strain ATCC BAA-138 / DSM 3043 / CIP 106854 / NCIMB 13768 / 1H11).